The following is a 135-amino-acid chain: Cilia- and flagella-associated protein 144 (135 aa).

Residues 76–100 are disordered; it reads QGPKKKYSETQTEAQEIGWDPNPLI.

This sequence belongs to the CFAP144 family. In terms of assembly, microtubule inner protein component of sperm flagellar doublet microtubules. As to expression, predominantly expressed in tissues containing motile cilia.

The protein localises to the cytoplasm. It localises to the cytoskeleton. Its subcellular location is the cilium axoneme. The protein resides in the flagellum axoneme. This Mus musculus (Mouse) protein is Cilia- and flagella-associated protein 144.